Here is a 491-residue protein sequence, read N- to C-terminus: Glutamyl-tRNA(Gln) amidotransferase subunit A (491 aa).

Catalysis depends on charge relay system residues K81 and S156. The Acyl-ester intermediate role is filled by S180.

It belongs to the amidase family. GatA subfamily. Heterotrimer of A, B and C subunits.

The catalysed reaction is L-glutamyl-tRNA(Gln) + L-glutamine + ATP + H2O = L-glutaminyl-tRNA(Gln) + L-glutamate + ADP + phosphate + H(+). Functionally, allows the formation of correctly charged Gln-tRNA(Gln) through the transamidation of misacylated Glu-tRNA(Gln) in organisms which lack glutaminyl-tRNA synthetase. The reaction takes place in the presence of glutamine and ATP through an activated gamma-phospho-Glu-tRNA(Gln). The sequence is that of Glutamyl-tRNA(Gln) amidotransferase subunit A from Alcanivorax borkumensis (strain ATCC 700651 / DSM 11573 / NCIMB 13689 / SK2).